Consider the following 228-residue polypeptide: C-type lectin domain-containing protein 88 (228 aa).

The first 18 residues, 1 to 18 (MQFIFFGTLFSGLLLVCA), serve as a signal peptide directing secretion. The O-linked (Xyl...) (chondroitin sulfate) serine glycan is linked to S27. The C-type lectin domain occupies 88-218 (YSDSCYWVET…CTYLFYSICE (131 aa)). 2 disulfide bridges follow: C109-C217 and C188-C209. N220 carries an N-linked (GlcNAc...) asparagine glycan.

The chain is C-type lectin domain-containing protein 88 from Caenorhabditis elegans.